The following is a 354-amino-acid chain: Protein OPG055 (354 aa).

The protein belongs to the orthopoxvirus OPG055 family.

Its function is as follows. Stimulates increases in peripheral microtubule dynamics and may increase the motility of the infected cells, contributing to cell-to-cell spread of the virus. Seems to inhibit the signaling via the GTPase RHOA and DIAPH1/mDia. The protein is Protein OPG055 (OPG055) of Homo sapiens (Human).